The sequence spans 557 residues: Urocanate hydratase (557 aa).

Residues 53–54 (GG), Q131, 177–179 (GMG), E197, R202, 243–244 (NA), 264–268 (QTSAH), 274–275 (YL), and Y323 each bind NAD(+). C411 is a catalytic residue. The interval 445–464 (LDSGSVSSPNRETESMRDGS) is disordered. Basic and acidic residues predominate over residues 455–464 (RETESMRDGS). Residue G493 participates in NAD(+) binding.

The protein belongs to the urocanase family. The cofactor is NAD(+).

The protein localises to the cytoplasm. The catalysed reaction is 4-imidazolone-5-propanoate = trans-urocanate + H2O. It participates in amino-acid degradation; L-histidine degradation into L-glutamate; N-formimidoyl-L-glutamate from L-histidine: step 2/3. In terms of biological role, catalyzes the conversion of urocanate to 4-imidazolone-5-propionate. The sequence is that of Urocanate hydratase from Pseudomonas putida (strain W619).